The primary structure comprises 375 residues: Dual-specificity RNA methyltransferase RlmN (375 aa).

Catalysis depends on glutamate 94, which acts as the Proton acceptor. A Radical SAM core domain is found at 100–339 (EEDRATLCVS…VTVRKTRGDD (240 aa)). A disulfide bridge links cysteine 107 with cysteine 344. Residues cysteine 114, cysteine 118, and cysteine 121 each contribute to the [4Fe-4S] cluster site. S-adenosyl-L-methionine-binding positions include 168–169 (GE), serine 200, 222–224 (SLH), and asparagine 301. Residue cysteine 344 is the S-methylcysteine intermediate of the active site.

The protein belongs to the radical SAM superfamily. RlmN family. The cofactor is [4Fe-4S] cluster.

It localises to the cytoplasm. It carries out the reaction adenosine(2503) in 23S rRNA + 2 reduced [2Fe-2S]-[ferredoxin] + 2 S-adenosyl-L-methionine = 2-methyladenosine(2503) in 23S rRNA + 5'-deoxyadenosine + L-methionine + 2 oxidized [2Fe-2S]-[ferredoxin] + S-adenosyl-L-homocysteine. The catalysed reaction is adenosine(37) in tRNA + 2 reduced [2Fe-2S]-[ferredoxin] + 2 S-adenosyl-L-methionine = 2-methyladenosine(37) in tRNA + 5'-deoxyadenosine + L-methionine + 2 oxidized [2Fe-2S]-[ferredoxin] + S-adenosyl-L-homocysteine. Functionally, specifically methylates position 2 of adenine 2503 in 23S rRNA and position 2 of adenine 37 in tRNAs. m2A2503 modification seems to play a crucial role in the proofreading step occurring at the peptidyl transferase center and thus would serve to optimize ribosomal fidelity. This Vibrio parahaemolyticus serotype O3:K6 (strain RIMD 2210633) protein is Dual-specificity RNA methyltransferase RlmN.